The primary structure comprises 511 residues: Inositol-3-phosphate synthase (511 aa).

Residues Gly70, Asn71, Asn72, Asp143, Ser179, Ile180, Gln190, Arg193, Ser230, Ala231, Asn232, Thr233, Gly281, Ser282, Asp306, Thr309, Asn340, Asn341, Asp342, Lys355, Gly393, Asp394, Asp422, and Ser423 each coordinate NAD(+).

It belongs to the myo-inositol 1-phosphate synthase family. It depends on NAD(+) as a cofactor.

Its subcellular location is the cytoplasm. The catalysed reaction is D-glucose 6-phosphate = 1D-myo-inositol 3-phosphate. It participates in polyol metabolism; myo-inositol biosynthesis; myo-inositol from D-glucose 6-phosphate: step 1/2. Key enzyme in myo-inositol biosynthesis pathway that catalyzes the conversion of glucose 6-phosphate to 1-myo-inositol 1-phosphate in a NAD-dependent manner. Rate-limiting enzyme in the synthesis of all inositol-containing compounds. The chain is Inositol-3-phosphate synthase (ino1) from Dictyostelium discoideum (Social amoeba).